The sequence spans 100 residues: Urease subunit gamma (100 aa).

This sequence belongs to the urease gamma subunit family. Heterotrimer of UreA (gamma), UreB (beta) and UreC (alpha) subunits. Three heterotrimers associate to form the active enzyme.

It is found in the cytoplasm. It carries out the reaction urea + 2 H2O + H(+) = hydrogencarbonate + 2 NH4(+). It functions in the pathway nitrogen metabolism; urea degradation; CO(2) and NH(3) from urea (urease route): step 1/1. The polypeptide is Urease subunit gamma (Lachnoclostridium phytofermentans (strain ATCC 700394 / DSM 18823 / ISDg) (Clostridium phytofermentans)).